Consider the following 110-residue polypeptide: Minor capsid protein VP2 (110 aa).

The protein belongs to the vesivirus VP2 protein family. As to quaternary structure, homooligomer. The portal-like structure consists in 12 copies of VP2. Interacts with capsid protein VP1.

It localises to the virion. The protein localises to the host cytoplasm. Functionally, minor structural protein that forms a portal-like structure at a unique three-fold axis of symmetry, following binding to the host receptor. The channel formed by VP2 may allow the delivery of the viral genome through the host endosomal membrane. This chain is Minor capsid protein VP2, found in Otariidae (fur seals &amp; sea lions).